Consider the following 375-residue polypeptide: Growth/differentiation factor 8 (375 aa).

An N-terminal signal peptide occupies residues 1-18; sequence MQKLQISVYIYLFMLIVA. A propeptide spanning residues 19–266 is cleaved from the precursor; it reads GPVDLNENSE…VTDTPKRSRR (248 aa). Asn47 and Asn71 each carry an N-linked (GlcNAc...) asparagine glycan. Cystine bridges form between Cys272/Cys282, Cys281/Cys340, Cys309/Cys372, and Cys313/Cys374.

Belongs to the TGF-beta family. Homodimer; disulfide-linked. Interacts with WFIKKN2, leading to inhibit its activity. Interacts with FSTL3. In terms of processing, synthesized as large precursor molecule that undergoes proteolytic cleavage to generate an N-terminal propeptide and a disulfide linked C-terminal dimer, which is the biologically active molecule. The circulating form consists of a latent complex of the C-terminal dimer and other proteins, including its propeptide, which maintain the C-terminal dimer in a latent, inactive state. Ligand activation requires additional cleavage of the prodomain by a tolloid-like metalloproteinase.

It is found in the secreted. Functionally, acts specifically as a negative regulator of skeletal muscle growth. The polypeptide is Growth/differentiation factor 8 (MSTN) (Bos gaurus (Seladang)).